We begin with the raw amino-acid sequence, 137 residues long: Large ribosomal subunit protein uL16 (137 aa).

Belongs to the universal ribosomal protein uL16 family. As to quaternary structure, part of the 50S ribosomal subunit.

Functionally, binds 23S rRNA and is also seen to make contacts with the A and possibly P site tRNAs. This Pseudomonas aeruginosa (strain LESB58) protein is Large ribosomal subunit protein uL16.